A 531-amino-acid polypeptide reads, in one-letter code: Probable bifunctional methylthioribulose-1-phosphate dehydratase/enolase-phosphatase E1 2 (531 aa).

Residues 1–248 (MGVPSEGAVG…AIKLHQLGLD (248 aa)) are methylthioribulose-1-phosphate dehydratase. A substrate-binding site is contributed by Cys120. 2 residues coordinate Zn(2+): His138 and His140. Residue Glu163 is the Proton donor/acceptor; for methylthioribulose-1-phosphate dehydratase activity of the active site. His213 is a binding site for Zn(2+). Residues 292–531 (ILLDIEGTTT…FRTIETFLEI (240 aa)) are enolase-phosphatase E1. Asp295 and Glu297 together coordinate Mg(2+). Substrate contacts are provided by residues 430 to 431 (SS) and Lys464. Position 490 (Asp490) interacts with Mg(2+).

It in the N-terminal section; belongs to the aldolase class II family. MtnB subfamily. This sequence in the C-terminal section; belongs to the HAD-like hydrolase superfamily. MasA/MtnC family. It depends on Zn(2+) as a cofactor. The cofactor is Mg(2+).

It carries out the reaction 5-(methylsulfanyl)-D-ribulose 1-phosphate = 5-methylsulfanyl-2,3-dioxopentyl phosphate + H2O. The enzyme catalyses 5-methylsulfanyl-2,3-dioxopentyl phosphate + H2O = 1,2-dihydroxy-5-(methylsulfanyl)pent-1-en-3-one + phosphate. Its pathway is amino-acid biosynthesis; L-methionine biosynthesis via salvage pathway; L-methionine from S-methyl-5-thio-alpha-D-ribose 1-phosphate: step 2/6. It participates in amino-acid biosynthesis; L-methionine biosynthesis via salvage pathway; L-methionine from S-methyl-5-thio-alpha-D-ribose 1-phosphate: step 3/6. It functions in the pathway amino-acid biosynthesis; L-methionine biosynthesis via salvage pathway; L-methionine from S-methyl-5-thio-alpha-D-ribose 1-phosphate: step 4/6. In Vitis vinifera (Grape), this protein is Probable bifunctional methylthioribulose-1-phosphate dehydratase/enolase-phosphatase E1 2.